The chain runs to 353 residues: MSEPLKPRIDFDGPLQAEKIPPLKGARAFDTLEADNFAPARLVTGEEEEGAAEAVVESVLRPKRSLWRRMVSAGLAIFGVSVVAQGVQWTANAWQTQDWIALGGCVAGALIVGAGVGSLATEWRRLWRLRQRAHERDEARDMLHSHAVGKAKAFCEKLAQQAGLDQSHPALQRWYAAIHETQSDREVVSLYAQLVQPVLDAQARREISRSAAESTLMIAVSPLALVDMAFIAWRNLRLINRIATLYGIELGYYSRLRLFRLVLLNIAFAGASELVREVGMDWMSQDLAARLSARAAQGIGAGLLTARLGIKAMELCRPLPWIADDKPRLGDFRRELIGQLKETLQKSKTRPEK.

A run of 3 helical transmembrane segments spans residues 70–90 (MVSA…VQWT), 99–119 (WIAL…VGSL), and 213–233 (ESTL…FIAW).

This sequence belongs to the UPF0283 family.

It is found in the cell inner membrane. This chain is UPF0283 membrane protein KPN78578_12740, found in Klebsiella pneumoniae subsp. pneumoniae (strain ATCC 700721 / MGH 78578).